The sequence spans 234 residues: ATP-dependent dethiobiotin synthetase BioD (234 aa).

12-17 (DVGKTF) serves as a coordination point for ATP. Position 16 (Thr16) interacts with Mg(2+). Lys37 is a catalytic residue. Residue Thr41 participates in substrate binding. Residues Asp54 and 115–118 (EGAG) contribute to the ATP site. Asp54 and Glu115 together coordinate Mg(2+).

This sequence belongs to the dethiobiotin synthetase family. As to quaternary structure, homodimer. Requires Mg(2+) as cofactor.

It localises to the cytoplasm. The enzyme catalyses (7R,8S)-7,8-diammoniononanoate + CO2 + ATP = (4R,5S)-dethiobiotin + ADP + phosphate + 3 H(+). Its pathway is cofactor biosynthesis; biotin biosynthesis; biotin from 7,8-diaminononanoate: step 1/2. Catalyzes a mechanistically unusual reaction, the ATP-dependent insertion of CO2 between the N7 and N8 nitrogen atoms of 7,8-diaminopelargonic acid (DAPA, also called 7,8-diammoniononanoate) to form a ureido ring. The sequence is that of ATP-dependent dethiobiotin synthetase BioD from Lysinibacillus sphaericus (Bacillus sphaericus).